Here is a 289-residue protein sequence, read N- to C-terminus: UPF0173 metal-dependent hydrolase H16_A2129 (289 aa).

It belongs to the UPF0173 family.

The sequence is that of UPF0173 metal-dependent hydrolase H16_A2129 from Cupriavidus necator (strain ATCC 17699 / DSM 428 / KCTC 22496 / NCIMB 10442 / H16 / Stanier 337) (Ralstonia eutropha).